Reading from the N-terminus, the 386-residue chain is Synaptotagmin-5 (386 aa).

Residues 1-16 (MFPEPPTLGSPAPKTP) are compositionally biased toward pro residues. Residues 1–21 (MFPEPPTLGSPAPKTPPDSSR) are disordered. At 1-24 (MFPEPPTLGSPAPKTPPDSSRIRQ) the chain is on the vesicular side. A helical membrane pass occupies residues 25–45 (GAVPAWVLATIVLGSGLLVFS). Over 46-386 (SCFCLYRKRC…PDRARPIPAP (341 aa)) the chain is Cytoplasmic. C2 domains follow at residues 108–227 (QLGR…QAWR) and 239–372 (KLGD…AQWH). 12 residues coordinate Ca(2+): leucine 138, aspartate 139, aspartate 145, aspartate 197, phenylalanine 198, aspartate 199, serine 202, aspartate 205, aspartate 270, aspartate 276, aspartate 330, and aspartate 332.

This sequence belongs to the synaptotagmin family. As to quaternary structure, homodimer. Interacts with both alpha- and beta-tubulin. Ca(2+) is required as a cofactor.

The protein localises to the cytoplasmic vesicle. The protein resides in the secretory vesicle. Its subcellular location is the synaptic vesicle membrane. It is found in the recycling endosome membrane. In terms of biological role, may be involved in Ca(2+)-dependent exocytosis of secretory vesicles through Ca(2+) and phospholipid binding to the C2 domain or may serve as Ca(2+) sensors in the process of vesicular trafficking and exocytosis. Regulates the Ca(2+)-dependent secretion of norepinephrine in PC12 cells. Required for export from the endocytic recycling compartment to the cell surface. The protein is Synaptotagmin-5 (Syt5) of Mus musculus (Mouse).